Consider the following 612-residue polypeptide: Putative zinc metalloproteinase C607.06c (612 aa).

Histidine 303 is a binding site for Zn(2+). Residue glutamate 304 is part of the active site. Zn(2+)-binding residues include histidine 307 and histidine 313. The Jacalin-type lectin domain maps to 477–612 (VYRSERYGLR…FMDSIGFFIK (136 aa)).

The protein belongs to the peptidase M10B family. Zn(2+) is required as a cofactor.

The sequence is that of Putative zinc metalloproteinase C607.06c from Schizosaccharomyces pombe (strain 972 / ATCC 24843) (Fission yeast).